A 132-amino-acid chain; its full sequence is D-ribose pyranase (132 aa).

Histidine 20 acts as the Proton donor in catalysis. Residues aspartate 28, histidine 99, and 121 to 123 each bind substrate; that span reads YSN.

The protein belongs to the RbsD / FucU family. RbsD subfamily. As to quaternary structure, homodecamer.

Its subcellular location is the cytoplasm. The enzyme catalyses beta-D-ribopyranose = beta-D-ribofuranose. It participates in carbohydrate metabolism; D-ribose degradation; D-ribose 5-phosphate from beta-D-ribopyranose: step 1/2. Functionally, catalyzes the interconversion of beta-pyran and beta-furan forms of D-ribose. This Lactococcus lactis subsp. cremoris (strain SK11) protein is D-ribose pyranase.